The primary structure comprises 115 residues: MTWLLLCLLAQYENGGKVLALSSSAKPYKTSVRFDPKTAHPNLVVSQDKKTVTWVQEAQSVPDNPERFNSTPCLLGSPGFTSGKHYWEVEYGNQRELAAGVARKSVKRKDHLRLT.

An N-terminal signal peptide occupies residues 1 to 15; the sequence is MTWLLLCLLAQYENG. A B30.2/SPRY domain is found at 22–115; it reads SSSAKPYKTS…VKRKDHLRLT (94 aa).

Belongs to the ohanin/vespryn family. In terms of tissue distribution, expressed by the venom gland.

The protein resides in the secreted. Functionally, neurotoxin that produces dose-dependent hypolocomotion and hyperalgesia in mice. May directly act on the central nervous system, as it is 6500-fold more potent when administered intracerebroventricularly than intraperitoneal. The polypeptide is Vespryn (Pogona barbata (Bearded dragon)).